We begin with the raw amino-acid sequence, 796 residues long: DnaJ homolog subfamily C member 10 (796 aa).

Residues 1 to 33 form the signal peptide; the sequence is MKHSLNTATSSSSVLKRTILYLVLISLAALVYC. The 65-residue stretch at 36-100 folds into the J domain; that stretch reads DYYDLLGVSK…DLRKKYDKYG (65 aa). In terms of domain architecture, Thioredoxin 1 spans 131 to 233; that stretch reads EIITLDRGEF…ERLVNFAMPY (103 aa). A disulfide bridge links Cys-159 with Cys-162. Trxb stretches follow at residues 236 to 351 and 349 to 464; these read STVT…LPDL and PDLE…PTNF. 3 consecutive Thioredoxin domains span residues 455 to 554, 558 to 668, and 672 to 780; these read HVIT…IEDL, SVVT…ALMY, and ASFD…ITKR. Cys-481 and Cys-484 are disulfide-bonded. Asn-531 is a glycosylation site (N-linked (GlcNAc...) asparagine). Cystine bridges form between Cys-589-Cys-592 and Cys-701-Cys-704. Asn-753 carries an N-linked (GlcNAc...) asparagine glycan. The Prevents secretion from ER signature appears at 793-796; it reads KDEL.

It is found in the endoplasmic reticulum lumen. Endoplasmic reticulum disulfide reductase involved both in the correct folding of proteins and degradation of misfolded proteins. Required for efficient folding of proteins in the endoplasmic reticulum by catalyzing the removal of non-native disulfide bonds formed during the folding of proteins. Also involved in endoplasmic reticulum-associated degradation (ERAD) by reducing incorrect disulfide bonds in misfolded glycoproteins. The protein is DnaJ homolog subfamily C member 10 (dnajc10) of Xenopus laevis (African clawed frog).